The following is a 173-amino-acid chain: Crossover junction endodeoxyribonuclease RuvC (173 aa).

Active-site residues include D8, E67, and D139. D8, E67, and D139 together coordinate Mg(2+).

It belongs to the RuvC family. In terms of assembly, homodimer which binds Holliday junction (HJ) DNA. The HJ becomes 2-fold symmetrical on binding to RuvC with unstacked arms; it has a different conformation from HJ DNA in complex with RuvA. In the full resolvosome a probable DNA-RuvA(4)-RuvB(12)-RuvC(2) complex forms which resolves the HJ. It depends on Mg(2+) as a cofactor.

It localises to the cytoplasm. The catalysed reaction is Endonucleolytic cleavage at a junction such as a reciprocal single-stranded crossover between two homologous DNA duplexes (Holliday junction).. Functionally, the RuvA-RuvB-RuvC complex processes Holliday junction (HJ) DNA during genetic recombination and DNA repair. Endonuclease that resolves HJ intermediates. Cleaves cruciform DNA by making single-stranded nicks across the HJ at symmetrical positions within the homologous arms, yielding a 5'-phosphate and a 3'-hydroxyl group; requires a central core of homology in the junction. The consensus cleavage sequence is 5'-(A/T)TT(C/G)-3'. Cleavage occurs on the 3'-side of the TT dinucleotide at the point of strand exchange. HJ branch migration catalyzed by RuvA-RuvB allows RuvC to scan DNA until it finds its consensus sequence, where it cleaves and resolves the cruciform DNA. The protein is Crossover junction endodeoxyribonuclease RuvC of Aeromonas hydrophila subsp. hydrophila (strain ATCC 7966 / DSM 30187 / BCRC 13018 / CCUG 14551 / JCM 1027 / KCTC 2358 / NCIMB 9240 / NCTC 8049).